A 790-amino-acid chain; its full sequence is Sodium- and chloride-dependent glycine transporter 2 (790 aa).

The interval methionine 1 to leucine 39 is disordered. The Cytoplasmic portion of the chain corresponds to methionine 1–aspartate 192. 3 consecutive transmembrane segments (helical) span residues phenylalanine 193–leucine 213, glycine 220–leucine 240, and glycine 264–methionine 284. Residues glycine 199, alanine 201, valine 202, and asparagine 206 each contribute to the Na(+) site. Over cysteine 285–tryptophan 387 the chain is Extracellular. Residues cysteine 304 and cysteine 313 are joined by a disulfide bond. 4 N-linked (GlcNAc...) asparagine glycosylation sites follow: asparagine 336, asparagine 346, asparagine 351, and asparagine 357. Helical transmembrane passes span proline 388–isoleucine 408, valine 427–isoleucine 447, and alanine 463–serine 483. Na(+)-binding residues include serine 470 and asparagine 502. Helical transmembrane passes span alanine 504–leucine 524, tryptophan 556–isoleucine 576, leucine 597–glycine 617, serine 631–leucine 651, isoleucine 672–glutamine 692, and methionine 708–isoleucine 728. The Na(+) site is built by leucine 567 and aspartate 570. At lysine 729–cysteine 790 the chain is on the cytoplasmic side.

It belongs to the sodium:neurotransmitter symporter (SNF) (TC 2.A.22) family. SLC6A5 subfamily. As to expression, first expressed in late neurula stages in the anterior spinal cord, where expression intensifies through the tailbud stages, and by hatching, expression is seen in the hindbrain. During late hatching stages, expression extends along most of the length of the spinal cord, mildly intensifies in the hindbrain, and appears in localized regions of the lateral forebrain and medial midbrain. By the swimming tadpole stage, weak expression appears in the anterior hindbrain, with stronger expression in the posterior, postmitotic neurons.

The protein resides in the cell membrane. The enzyme catalyses glycine(out) + chloride(out) + 3 Na(+)(out) = glycine(in) + chloride(in) + 3 Na(+)(in). In terms of biological role, sodium- and chloride-dependent glycine transporter. Terminates the action of glycine by its high affinity sodium-dependent reuptake into presynaptic terminals. May be responsible for the termination of neurotransmission at strychnine-sensitive glycinergic synapses. The chain is Sodium- and chloride-dependent glycine transporter 2 from Xenopus laevis (African clawed frog).